The chain runs to 253 residues: Methionine aminopeptidase (253 aa).

His78 contributes to the substrate binding site. A divalent metal cation is bound by residues Asp95, Asp106, and His169. His176 serves as a coordination point for substrate. A divalent metal cation contacts are provided by Glu206 and Glu237.

The protein belongs to the peptidase M24A family. Methionine aminopeptidase type 1 subfamily. As to quaternary structure, monomer. Co(2+) serves as cofactor. Requires Zn(2+) as cofactor. The cofactor is Mn(2+). It depends on Fe(2+) as a cofactor.

The catalysed reaction is Release of N-terminal amino acids, preferentially methionine, from peptides and arylamides.. In terms of biological role, removes the N-terminal methionine from nascent proteins. The N-terminal methionine is often cleaved when the second residue in the primary sequence is small and uncharged (Met-Ala-, Cys, Gly, Pro, Ser, Thr, or Val). Requires deformylation of the N(alpha)-formylated initiator methionine before it can be hydrolyzed. This is Methionine aminopeptidase from Helicobacter pylori (strain ATCC 700392 / 26695) (Campylobacter pylori).